Reading from the N-terminus, the 223-residue chain is Small ribosomal subunit protein uS3 (223 aa).

One can recognise a KH type-2 domain in the interval 39–117 (IREHLRKKPS…RPELNAKLVA (79 aa)).

It belongs to the universal ribosomal protein uS3 family. Part of the 30S ribosomal subunit. Forms a tight complex with proteins S10 and S14.

Its function is as follows. Binds the lower part of the 30S subunit head. Binds mRNA in the 70S ribosome, positioning it for translation. The polypeptide is Small ribosomal subunit protein uS3 (Chlamydia caviae (strain ATCC VR-813 / DSM 19441 / 03DC25 / GPIC) (Chlamydophila caviae)).